A 156-amino-acid polypeptide reads, in one-letter code: Small ribosomal subunit protein uS7 (156 aa).

Belongs to the universal ribosomal protein uS7 family. As to quaternary structure, part of the 30S ribosomal subunit. Contacts proteins S9 and S11.

Functionally, one of the primary rRNA binding proteins, it binds directly to 16S rRNA where it nucleates assembly of the head domain of the 30S subunit. Is located at the subunit interface close to the decoding center, probably blocks exit of the E-site tRNA. The polypeptide is Small ribosomal subunit protein uS7 (Polynucleobacter necessarius subsp. necessarius (strain STIR1)).